The following is a 414-amino-acid chain: uncharacterized protein (414 aa).

Disordered regions lie at residues S136–T168, P297–S333, and A346–K414. Polar residues predominate over residues P350–S359. The span at S399 to K414 shows a compositional bias: basic and acidic residues.

This is an uncharacterized protein from Homo sapiens (Human).